A 346-amino-acid polypeptide reads, in one-letter code: DNA polymerase IV 2 (346 aa).

A UmuC domain is found at 9-191 (ILHVDLDQFL…RTVEALWGVG (183 aa)). Mg(2+) contacts are provided by aspartate 13 and aspartate 111. The active site involves glutamate 112.

This sequence belongs to the DNA polymerase type-Y family. In terms of assembly, monomer. Mg(2+) serves as cofactor.

The protein localises to the cytoplasm. It catalyses the reaction DNA(n) + a 2'-deoxyribonucleoside 5'-triphosphate = DNA(n+1) + diphosphate. Its function is as follows. Poorly processive, error-prone DNA polymerase involved in untargeted mutagenesis. Copies undamaged DNA at stalled replication forks, which arise in vivo from mismatched or misaligned primer ends. These misaligned primers can be extended by PolIV. Exhibits no 3'-5' exonuclease (proofreading) activity. May be involved in translesional synthesis, in conjunction with the beta clamp from PolIII. The polypeptide is DNA polymerase IV 2 (dinB2) (Mycobacterium bovis (strain ATCC BAA-935 / AF2122/97)).